A 156-amino-acid chain; its full sequence is ATP synthase subunit b (156 aa).

A helical transmembrane segment spans residues 3-23 (ITFTIFAQSLAFAALIWIVAT).

Belongs to the ATPase B chain family. In terms of assembly, F-type ATPases have 2 components, F(1) - the catalytic core - and F(0) - the membrane proton channel. F(1) has five subunits: alpha(3), beta(3), gamma(1), delta(1), epsilon(1). F(0) has three main subunits: a(1), b(2) and c(10-14). The alpha and beta chains form an alternating ring which encloses part of the gamma chain. F(1) is attached to F(0) by a central stalk formed by the gamma and epsilon chains, while a peripheral stalk is formed by the delta and b chains.

It localises to the cell inner membrane. F(1)F(0) ATP synthase produces ATP from ADP in the presence of a proton or sodium gradient. F-type ATPases consist of two structural domains, F(1) containing the extramembraneous catalytic core and F(0) containing the membrane proton channel, linked together by a central stalk and a peripheral stalk. During catalysis, ATP synthesis in the catalytic domain of F(1) is coupled via a rotary mechanism of the central stalk subunits to proton translocation. Its function is as follows. Component of the F(0) channel, it forms part of the peripheral stalk, linking F(1) to F(0). This is ATP synthase subunit b from Xylella fastidiosa (strain M23).